The primary structure comprises 86 residues: Putative membrane protein insertion efficiency factor (86 aa).

It belongs to the UPF0161 family.

It is found in the cell inner membrane. In terms of biological role, could be involved in insertion of integral membrane proteins into the membrane. The chain is Putative membrane protein insertion efficiency factor from Haemophilus influenzae (strain 86-028NP).